Here is a 187-residue protein sequence, read N- to C-terminus: Urease accessory protein UreE (187 aa).

The interval 154–187 (RANSAQGHGHSHGHSHSHDHHGYHHHGDGNWHKH) is disordered. Residues 162 to 177 (GHSHGHSHSHDHHGYH) show a composition bias toward basic residues. A compositionally biased stretch (basic and acidic residues) spans 178–187 (HHGDGNWHKH).

This sequence belongs to the UreE family.

Its subcellular location is the cytoplasm. Functionally, involved in urease metallocenter assembly. Binds nickel. Probably functions as a nickel donor during metallocenter assembly. This Actinobacillus pleuropneumoniae (Haemophilus pleuropneumoniae) protein is Urease accessory protein UreE.